Consider the following 145-residue polypeptide: NADH-ubiquinone oxidoreductase subunit 8 (145 aa).

4Fe-4S ferredoxin-type domains lie at 43-73 and 83-112; these read LRFYWCGLERCIACRLCDLICPSLALDVRVG and DWFTLSYRRCIYCGFCMHVCPTDAITHSLF. C53, C56, C59, C63, C92, C95, C98, and C102 together coordinate [4Fe-4S] cluster.

This sequence belongs to the complex I 23 kDa subunit family. [4Fe-4S] cluster serves as cofactor.

The protein localises to the mitochondrion. It carries out the reaction a ubiquinone + NADH + 5 H(+)(in) = a ubiquinol + NAD(+) + 4 H(+)(out). Core subunit of the mitochondrial membrane respiratory chain NADH dehydrogenase (Complex I) that is believed to belong to the minimal assembly required for catalysis. Complex I functions in the transfer of electrons from NADH to the respiratory chain. The immediate electron acceptor for the enzyme is believed to be ubiquinone. May donate electrons to ubiquinone. This is NADH-ubiquinone oxidoreductase subunit 8 (M-ISP1) from Trypanosoma brucei brucei.